The following is a 725-amino-acid chain: Ribosomal RNA large subunit methyltransferase K/L (725 aa).

The region spanning serine 45–leucine 156 is the THUMP domain.

This sequence belongs to the methyltransferase superfamily. RlmKL family.

The protein localises to the cytoplasm. The catalysed reaction is guanosine(2445) in 23S rRNA + S-adenosyl-L-methionine = N(2)-methylguanosine(2445) in 23S rRNA + S-adenosyl-L-homocysteine + H(+). It catalyses the reaction guanosine(2069) in 23S rRNA + S-adenosyl-L-methionine = N(2)-methylguanosine(2069) in 23S rRNA + S-adenosyl-L-homocysteine + H(+). Its function is as follows. Specifically methylates the guanine in position 2445 (m2G2445) and the guanine in position 2069 (m7G2069) of 23S rRNA. The chain is Ribosomal RNA large subunit methyltransferase K/L from Marinobacter nauticus (strain ATCC 700491 / DSM 11845 / VT8) (Marinobacter aquaeolei).